Reading from the N-terminus, the 461-residue chain is PTS system sucrose-specific EIIBC component (461 aa).

A PTS EIIB type-1 domain is found at 4 to 87 (KETAKRLIEL…SKEADIEREE (84 aa)). Residue Cys-26 is the Phosphocysteine intermediate; for EIIB activity of the active site. Residues 107–461 (KTLSNIFVPI…KINEDEERKK (355 aa)) form the PTS EIIC type-1 domain. 10 helical membrane passes run 112-132 (IFVP…LLGM), 148-168 (LLDM…GVSA), 178-198 (LGAV…WGLA), 208-228 (FGFD…LLAV), 248-268 (LLVT…IAIG), 289-309 (AGFV…LTGV), 329-349 (LLPI…AVFF), 359-379 (IALP…IFGV), 387-407 (FIAA…THVA), and 430-450 (LIHY…AAFV).

The protein localises to the cell membrane. The catalysed reaction is N(pros)-phospho-L-histidyl-[protein](out) + sucrose = sucrose 6(G)-phosphate(in) + L-histidyl-[protein]. In terms of biological role, the phosphoenolpyruvate-dependent sugar phosphotransferase system (sugar PTS), a major carbohydrate active transport system, catalyzes the phosphorylation of incoming sugar substrates concomitantly with their translocation across the cell membrane. This system is involved in sucrose transport. This is PTS system sucrose-specific EIIBC component (sacP) from Bacillus subtilis (strain 168).